Consider the following 476-residue polypeptide: Cytochrome P450 6B5 (476 aa).

Cys443 is a heme binding site.

Belongs to the cytochrome P450 family. The cofactor is heme.

Its subcellular location is the endoplasmic reticulum membrane. The protein localises to the microsome membrane. It catalyses the reaction an organic molecule + reduced [NADPH--hemoprotein reductase] + O2 = an alcohol + oxidized [NADPH--hemoprotein reductase] + H2O + H(+). Its function is as follows. Enables the insect to feed on furanocoumarin-producing plants and evolved as an adaptation for detoxification of xanthotoxin and other furanocoumarins. The protein is Cytochrome P450 6B5 (CYP6B5) of Papilio glaucus (Eastern tiger swallowtail butterfly).